We begin with the raw amino-acid sequence, 113 residues long: UPF0122 protein LSEI_1603 (113 aa).

This sequence belongs to the UPF0122 family.

Functionally, might take part in the signal recognition particle (SRP) pathway. This is inferred from the conservation of its genetic proximity to ftsY/ffh. May be a regulatory protein. In Lacticaseibacillus paracasei (strain ATCC 334 / BCRC 17002 / CCUG 31169 / CIP 107868 / KCTC 3260 / NRRL B-441) (Lactobacillus paracasei), this protein is UPF0122 protein LSEI_1603.